A 356-amino-acid chain; its full sequence is MYRVVRRLLFLTPPERIHTLVFAMLRCVTSIAVLRRLLRWVLGPTDPVLASTVFGVRFPGPLGLAAGFDKDGMGLLAWGALGFGYAEVGTVTAYPQPGNPAPRMFRLPADRALLNRMGFNNNGAGALAIQLAHHRPEVPIGVNISKTKATPASHTVDDYRASARLVGPLASYLVVNVSSPNTPGLRDLQAVESLRAILLGVLAETSVPVLVKIAPDISDSEIDDITDLAVELRLAGIVATNTTVSRDCLVTPGIDALGAGGISGPPVARRAVEVLRRLYGRVGDRLVLISVGGIETADDAWDRITAGASLLQGYTGFIYGGGFWPKHIHDGIARRLHDGGFASLRDAVGSATAKSE.

FMN-binding positions include 66–70 (AGFDK) and Thr-90. Lys-70 is a substrate binding site. 115-119 (NRMGF) contributes to the substrate binding site. FMN contacts are provided by Asn-143 and Asn-176. Residue Asn-176 participates in substrate binding. The active-site Nucleophile is the Ser-179. Asn-181 serves as a coordination point for substrate. 2 residues coordinate FMN: Lys-212 and Thr-240. Residue 241-242 (NT) participates in substrate binding. FMN contacts are provided by residues Gly-264, Gly-293, and 314–315 (YT).

The protein belongs to the dihydroorotate dehydrogenase family. Type 2 subfamily. In terms of assembly, monomer. FMN serves as cofactor.

It localises to the cell membrane. The enzyme catalyses (S)-dihydroorotate + a quinone = orotate + a quinol. It participates in pyrimidine metabolism; UMP biosynthesis via de novo pathway; orotate from (S)-dihydroorotate (quinone route): step 1/1. Catalyzes the conversion of dihydroorotate to orotate with quinone as electron acceptor. In Mycobacterium leprae (strain TN), this protein is Dihydroorotate dehydrogenase (quinone) (pyrD).